A 490-amino-acid polypeptide reads, in one-letter code: Endoglucanase 13 (490 aa).

A signal peptide spans 1–26; sequence MSQLKNGSSQCLWTSICIVLIVMSMA. A glycan (N-linked (GlcNAc...) asparagine) is linked at Asn-6. Asp-86 acts as the Nucleophile in catalysis. Catalysis depends on residues His-412, Asp-464, and Glu-473.

This sequence belongs to the glycosyl hydrolase 9 (cellulase E) family.

The protein resides in the secreted. It catalyses the reaction Endohydrolysis of (1-&gt;4)-beta-D-glucosidic linkages in cellulose, lichenin and cereal beta-D-glucans.. This chain is Endoglucanase 13, found in Arabidopsis thaliana (Mouse-ear cress).